A 187-amino-acid chain; its full sequence is UPF0340 protein SPP_0683 (187 aa).

The protein belongs to the UPF0340 family.

The polypeptide is UPF0340 protein SPP_0683 (Streptococcus pneumoniae (strain P1031)).